Consider the following 238-residue polypeptide: ATP synthase subunit a (238 aa).

Helical transmembrane passes span 18-38, 76-96, 114-134, 166-186, and 193-213; these read LTLL…VFWA, YSLL…LGLF, NLAF…IEGI, SLAI…GLIV, and LYWW…SIFI.

It belongs to the ATPase A chain family. In terms of assembly, F-type ATPases have 2 components, CF(1) - the catalytic core - and CF(0) - the membrane proton channel. CF(1) has five subunits: alpha(3), beta(3), gamma(1), delta(1), epsilon(1). CF(0) has three main subunits: a(1), b(2) and c(9-12). The alpha and beta chains form an alternating ring which encloses part of the gamma chain. CF(1) is attached to CF(0) by a central stalk formed by the gamma and epsilon chains, while a peripheral stalk is formed by the delta and b chains.

It is found in the cell membrane. In terms of biological role, key component of the proton channel; it plays a direct role in the translocation of protons across the membrane. The polypeptide is ATP synthase subunit a (Streptococcus equi subsp. zooepidemicus (strain H70)).